A 410-amino-acid chain; its full sequence is Putative transporter AmpG 1 (410 aa).

Helical transmembrane passes span 5–25 (LSII…TGNT), 40–60 (IGLL…APIF), 76–96 (LSWI…LSFL), 98–118 (PFDN…FSSM), 141–161 (GIYI…AIYL), 169–189 (EIYK…IVGV), 217–237 (ILKP…LILY), 265–285 (VGKF…GFIM), 290–310 (ILDS…LFII), 320–340 (LLFI…TAYI), 356–378 (YSFF…GYIV), and 383–402 (WQNF…LVLL).

This sequence belongs to the major facilitator superfamily.

The protein localises to the cell inner membrane. The chain is Putative transporter AmpG 1 (ampG1) from Rickettsia bellii (strain RML369-C).